Consider the following 192-residue polypeptide: Imidazoleglycerol-phosphate dehydratase (192 aa).

This sequence belongs to the imidazoleglycerol-phosphate dehydratase family.

The protein resides in the cytoplasm. It catalyses the reaction D-erythro-1-(imidazol-4-yl)glycerol 3-phosphate = 3-(imidazol-4-yl)-2-oxopropyl phosphate + H2O. Its pathway is amino-acid biosynthesis; L-histidine biosynthesis; L-histidine from 5-phospho-alpha-D-ribose 1-diphosphate: step 6/9. This is Imidazoleglycerol-phosphate dehydratase from Vesicomyosocius okutanii subsp. Calyptogena okutanii (strain HA).